A 298-amino-acid polypeptide reads, in one-letter code: GTPase Era (298 aa).

In terms of domain architecture, Era-type G spans 4–171 (KSGFVSIVGR…VEGIFELLPE (168 aa)). The interval 12 to 19 (GRPNVGKS) is G1. A GTP-binding site is contributed by 12–19 (GRPNVGKS). Positions 38 to 42 (QTTRN) are G2. The G3 stretch occupies residues 59-62 (DTPG). GTP contacts are provided by residues 59–63 (DTPGV) and 121–124 (NKID). Residues 121 to 124 (NKID) are G4. Positions 150-152 (ISA) are G5. A KH type-2 domain is found at 202–280 (TREEIPHSVA…YLDLWVKVKE (79 aa)).

Belongs to the TRAFAC class TrmE-Era-EngA-EngB-Septin-like GTPase superfamily. Era GTPase family. Monomer.

The protein localises to the cytoplasm. The protein resides in the cell membrane. In terms of biological role, an essential GTPase that binds both GDP and GTP, with rapid nucleotide exchange. Plays a role in 16S rRNA processing and 30S ribosomal subunit biogenesis and possibly also in cell cycle regulation and energy metabolism. The sequence is that of GTPase Era from Carboxydothermus hydrogenoformans (strain ATCC BAA-161 / DSM 6008 / Z-2901).